Here is a 673-residue protein sequence, read N- to C-terminus: MTNYLLEIGLEEIPAHLVTPSINQLAERMEAFLNENRLKFDKIIKFSTPRRLALIVEGLSESSEAIDEEVKGPSAKIAKDAEGNWSKAIQGFSRGQGATPDDLILKGDYYYAKKHVDGVKAEEILSKVGDEVIAKMTFSTYMKWGNNDFLFVRPIQWIVSLLEDEIVAFDLLDVTANRFSRGHRFLANVEIELKNANDYASKMPENFVLVDAEHRKAEISAQILALASENNWQVTLHKDLLEEVNNIVEYPTAFVGSFDPKYLSVPAEVLVTSMRDNQRYFEVYNQEGQLAPNFISVRNGNAEHIENVVLGNEKVLVARLEDAEFFWKEDQKLKIEDLVAKLGKVTFHAKIGSITEHMARTKLIAAKLADIAGLTDEEKVDVARSAEIYKFDLLTGMVGEFDELQGVMGEKYALLAGENANVAAAIREHYMPTSADGQLPETKVGSVLAAADKIDSVLSFFNVGLIPSGSNDPYALRRAVQGLIRIIEKMNWHFDLSLFIDQFEGQNHAEILEFVKARVQKLLLEKLDRYDIVEAAINSSNFDITNMMESAFVIDGHKLHEPFKPAIENVSRSINLVKKAADIAEINPALFEEDTEQALYDAVISLQNQWTYKPCEEKFRAIVHTLAPAIEAFFDNVMVMAEDLAVRDNRIALLSEVVALTSVMADFSLINTK.

It belongs to the class-II aminoacyl-tRNA synthetase family. As to quaternary structure, tetramer of two alpha and two beta subunits.

The protein resides in the cytoplasm. The enzyme catalyses tRNA(Gly) + glycine + ATP = glycyl-tRNA(Gly) + AMP + diphosphate. The sequence is that of Glycine--tRNA ligase beta subunit from Lactococcus lactis subsp. cremoris (strain SK11).